The following is a 366-amino-acid chain: Transmembrane protein 25 (366 aa).

An N-terminal signal peptide occupies residues 1-26 (MALPPGPAALRHTLLLLPALLSSGWG). At 27–232 (ELEPQIDGQT…APGLLATRVE (206 aa)) the chain is on the extracellular side. In terms of domain architecture, Ig-like spans 30–123 (PQIDGQTWAE…SGRSANASVI (94 aa)). Cys-52 and Cys-107 are joined by a disulfide. Asn-106, Asn-162, Asn-175, Asn-192, and Asn-205 each carry an N-linked (GlcNAc...) asparagine glycan. Residues 233–253 (VPLLGIVVAAGLALGTLVGFS) traverse the membrane as a helical segment. Over 254–366 (TLVACLVCRK…SSVSSDEIWL (113 aa)) the chain is Cytoplasmic. Residues 299–308 (PSNLQLNDLT) show a composition bias toward polar residues. The disordered stretch occupies residues 299–335 (PSNLQLNDLTPDSRAVKPADRQMAQNNSRPELLDPEP).

In terms of assembly, interacts with GRIN2B. As to expression, expressed throughout the brain with higher levels in the pyramidal cell layer of the hippocampal CA1 and CA3 regions. Also highly expressed within the hippocampal dentate gyrus region and cerebellum and in scattered neurons in the cerebral cortex.

It localises to the cell membrane. The protein resides in the secreted. The protein localises to the late endosome. It is found in the lysosome. Functionally, in neurons, modulates the degradation of NMDA receptor GRIN2B subunit. Plays a role in the regulation of neuronal excitability. The chain is Transmembrane protein 25 (TMEM25) from Homo sapiens (Human).